Consider the following 500-residue polypeptide: Putative beta-lactamase-like 1 (500 aa).

This sequence belongs to the beta-lactamase family.

This chain is Putative beta-lactamase-like 1 (LACTBL1), found in Homo sapiens (Human).